The primary structure comprises 303 residues: uncharacterized protein (303 aa).

4 consecutive transmembrane segments (helical) span residues 55-77 (FLVK…LFIQ), 92-111 (PAVF…TKII), 208-230 (FSLP…ATSL), and 240-257 (IPHI…KILI).

Its subcellular location is the cell membrane. This is an uncharacterized protein from Bacillus subtilis (strain 168).